A 695-amino-acid chain; its full sequence is F-box only protein 34 (695 aa).

Disordered stretches follow at residues 239–275 (GQSR…QGEP), 316–373 (LTNG…CPSL), and 472–524 (GQDQ…PGGS). The F-box domain maps to 556-608 (QQYMACLPHHIIVKIFRLLPTLSLAILKCTCRYFKSIIEYYNIRPADSRWVRD).

In terms of assembly, directly interacts with SKP1 and CUL1.

In terms of biological role, substrate-recognition component of the SCF (SKP1-CUL1-F-box protein)-type E3 ubiquitin ligase complex. The sequence is that of F-box only protein 34 (Fbxo34) from Mus musculus (Mouse).